Here is a 282-residue protein sequence, read N- to C-terminus: Virginiamycin B lyase (282 aa).

H217 is a binding site for substrate. E256 is a binding site for Mg(2+). H258 serves as the catalytic Proton acceptor. Residue E273 participates in Mg(2+) binding.

Belongs to the Vgb family. As to quaternary structure, monomer. Requires Mg(2+) as cofactor.

Inactivates the type B streptogramin antibiotics by linearizing the lactone ring at the ester linkage, generating a free phenylglycine carboxylate and converting the threonyl moiety into 2-amino-butenoic acid. The protein is Virginiamycin B lyase of Mycolicibacterium smegmatis (strain ATCC 700084 / mc(2)155) (Mycobacterium smegmatis).